The chain runs to 142 residues: Regulatory protein RecX (142 aa).

It belongs to the RecX family.

It is found in the cytoplasm. In terms of biological role, modulates RecA activity. The sequence is that of Regulatory protein RecX from Thermus thermophilus (strain ATCC BAA-163 / DSM 7039 / HB27).